Here is a 20-residue protein sequence, read N- to C-terminus: Zinc metalloproteinase-disintegrin-like uracoina-1 (20 aa).

This sequence belongs to the venom metalloproteinase (M12B) family. P-III subfamily. As to quaternary structure, monomer. It depends on Zn(2+) as a cofactor. In terms of tissue distribution, expressed by the venom gland.

The protein resides in the secreted. With respect to regulation, inhibited by ethylenediaminetetraacetic acid (EDTA) and 1,10-phenanthroline. Not inhibited by tosyl-L-lysine chloromethyl ketone (TCLK) and phenylmethanesulfonylfluoride (PMSF). Its function is as follows. Snake venom zinc metalloprotease that possesses hemorrhagic activity (minimum hemorrhagic dose, MHD=4.7 ug) when injected intradermally into mice. Degrades the alpha-chain of fibrinogen (FGA). This Crotalus vegrandis (Uracoan rattlesnake) protein is Zinc metalloproteinase-disintegrin-like uracoina-1.